The primary structure comprises 324 residues: Glutathione synthetase (324 aa).

The region spanning 125–312 is the ATP-grasp domain; the sequence is EKLFTTTHFP…ISTIILDNLE (188 aa). 152–209 contacts ATP; it reads FIKTYKDIIIKPLHGMAGLSIFRIKEHDPNTSVIIETMTKYETIPCISQNYITDIQKG. Glutamate 283 and asparagine 285 together coordinate Mg(2+).

The protein belongs to the prokaryotic GSH synthase family. It depends on Mg(2+) as a cofactor. Mn(2+) is required as a cofactor.

It catalyses the reaction gamma-L-glutamyl-L-cysteine + glycine + ATP = glutathione + ADP + phosphate + H(+). The protein operates within sulfur metabolism; glutathione biosynthesis; glutathione from L-cysteine and L-glutamate: step 2/2. The polypeptide is Glutathione synthetase (Buchnera aphidicola subsp. Baizongia pistaciae (strain Bp)).